Reading from the N-terminus, the 200-residue chain is Probable molybdenum cofactor guanylyltransferase (200 aa).

Residues L8–G10, K20, D66, and D97 contribute to the GTP site. D97 contributes to the Mg(2+) binding site.

Belongs to the MobA family. The cofactor is Mg(2+).

It localises to the cytoplasm. It carries out the reaction Mo-molybdopterin + GTP + H(+) = Mo-molybdopterin guanine dinucleotide + diphosphate. Functionally, transfers a GMP moiety from GTP to Mo-molybdopterin (Mo-MPT) cofactor (Moco or molybdenum cofactor) to form Mo-molybdopterin guanine dinucleotide (Mo-MGD) cofactor. The chain is Probable molybdenum cofactor guanylyltransferase from Bacillus velezensis (strain DSM 23117 / BGSC 10A6 / LMG 26770 / FZB42) (Bacillus amyloliquefaciens subsp. plantarum).